The following is a 107-amino-acid chain: Phosphoribosyl-ATP pyrophosphatase (107 aa).

This sequence belongs to the PRA-PH family.

The protein localises to the cytoplasm. It catalyses the reaction 1-(5-phospho-beta-D-ribosyl)-ATP + H2O = 1-(5-phospho-beta-D-ribosyl)-5'-AMP + diphosphate + H(+). Its pathway is amino-acid biosynthesis; L-histidine biosynthesis; L-histidine from 5-phospho-alpha-D-ribose 1-diphosphate: step 2/9. In Azoarcus sp. (strain BH72), this protein is Phosphoribosyl-ATP pyrophosphatase.